The following is a 118-amino-acid chain: Large ribosomal subunit protein bL20 (118 aa).

This sequence belongs to the bacterial ribosomal protein bL20 family.

Binds directly to 23S ribosomal RNA and is necessary for the in vitro assembly process of the 50S ribosomal subunit. It is not involved in the protein synthesizing functions of that subunit. The sequence is that of Large ribosomal subunit protein bL20 from Azotobacter vinelandii (strain DJ / ATCC BAA-1303).